A 394-amino-acid polypeptide reads, in one-letter code: Actin-related protein 2 (394 aa).

ATP is bound by residues 160–162 (GDG), 214–218 (RMIKE), and 305–310 (GGSTMY).

It belongs to the actin family. ARP2 subfamily. In terms of assembly, component of the Arp2/3 complex composed of ACTR2/ARP2, ACTR3/ARP3, ARPC1B/p41-ARC, ARPC2/p34-ARC, ARPC3/p21-ARC, ARPC4/p20-ARC and ARPC5/p16-ARC.

The protein localises to the cytoplasm. It localises to the cytoskeleton. It is found in the cell projection. Its subcellular location is the nucleus. Functionally, ATP-binding component of the Arp2/3 complex, a multiprotein complex that mediates actin polymerization upon stimulation by nucleation-promoting factor (NPF). The Arp2/3 complex mediates the formation of branched actin networks in the cytoplasm, providing the force for cell motility. Seems to contact the pointed end of the daughter actin filament. In addition to its role in the cytoplasmic cytoskeleton, the Arp2/3 complex also promotes actin polymerization in the nucleus, thereby regulating gene transcription and repair of damaged DNA. The Arp2/3 complex promotes homologous recombination (HR) repair in response to DNA damage by promoting nuclear actin polymerization, leading to drive motility of double-strand breaks (DSBs). The chain is Actin-related protein 2 (ACTR2) from Gallus gallus (Chicken).